Here is a 549-residue protein sequence, read N- to C-terminus: Chaperonin GroEL (549 aa).

Residues 29–32 (TAGP), Lys-50, 86–90 (DGTTT), Gly-418, and Asp-499 contribute to the ATP site.

The protein belongs to the chaperonin (HSP60) family. Forms a cylinder of 14 subunits composed of two heptameric rings stacked back-to-back. Interacts with the co-chaperonin GroES.

The protein localises to the cytoplasm. The enzyme catalyses ATP + H2O + a folded polypeptide = ADP + phosphate + an unfolded polypeptide.. Functionally, together with its co-chaperonin GroES, plays an essential role in assisting protein folding. The GroEL-GroES system forms a nano-cage that allows encapsulation of the non-native substrate proteins and provides a physical environment optimized to promote and accelerate protein folding. The sequence is that of Chaperonin GroEL from Wolbachia pipientis wMel.